Reading from the N-terminus, the 907-residue chain is MTQLTVKALSEEIGTPVDRLLEQLADAGMKKSSSDQVSDEEKQKLLTHLKKEHGDTSGDAEPTRLTLQRKTRSTLSVNAGGGKSKDVQIEVRKKRTYVKRSAIEDEAKREAEEAAQREAEEAAKRAAEEAAKREAEEAAKREAEEKAKREAEEAAKREAEKSVDRDAEEKAKRDAEGKAKRDAEEKVKQEAARKEAEELKRRQEEEAKRKAEEESQRKLEEAREMAEKNKERWSAAEENKGDMEDTDYHVTTSQYAREAEDEADRKEEEARRRKKKTKSSAKASENDERGGPRVQRGGKGGRKGKLSKPKSMQHGFDKSAVVAKSDVVIGETIVVSELANKMSVKATEVIKIMMKMGAMATINQVIDQETAQLVAEEMGHKVVLRKENELEEAVLSDRDNMFEAVPRAPVVTIMGHVDHGKTSTLDYIRRTHVASGEAGGITQHIGAYHVETENGMITFLDTPGHAAFTAMRARGAQATDIVVLVVAADDGVMPQTVEAIQHAKAAGVPLIVAVNKIDKEEANPDNVKNELSQYNVMPEEWGGENMFVHISAKQGTNIDQLLETILLQAEVLELTAVKDGMASGVVVESRLDKGRGPVATVLVQSGTLRKGDIVLCGQEYGRVRAMRDEIGNEVNEAGPSIPVEILGLSGVPAAGDEATVVRDERKAREVANYRAGKFREVKLARQQKSKLENMFSNMAAGDVAELNIVLKADVQGSVEAIADSLTKLSTEEVKVNIVGSGVGGITETDAVLAEASNAIILGFNVRADASARRAIEAASIDLRYYSIIYQLIDEVKQAMSGMLAPEFKQEIIGLAEVRDVFKSPKLGAIAGCMVTEGLIKRNAPIRVLRDNVVIYEGELESLRRFKDDVAEVKNGYECGIGVKNYNDVRVGDQIEVFETIEIKRTID.

The segment at 26–317 is disordered; that stretch reads DAGMKKSSSD…KPKSMQHGFD (292 aa). Basic and acidic residues-rich tracts occupy residues 28 to 44 and 101 to 248; these read GMKK…EKQK and SAIE…DTDY. Basic residues predominate over residues 299–308; it reads KGGRKGKLSK. The 170-residue stretch at 406 to 575 folds into the tr-type G domain; it reads PRAPVVTIMG…LLQAEVLELT (170 aa). Positions 415–422 are G1; that stretch reads GHVDHGKT. 415 to 422 contacts GTP; it reads GHVDHGKT. The G2 stretch occupies residues 440-444; that stretch reads GITQH. Residues 461 to 464 are G3; the sequence is DTPG. Residues 461 to 465 and 515 to 518 contribute to the GTP site; these read DTPGH and NKID. The tract at residues 515–518 is G4; that stretch reads NKID. The G5 stretch occupies residues 551–553; sequence SAK.

It belongs to the TRAFAC class translation factor GTPase superfamily. Classic translation factor GTPase family. IF-2 subfamily.

It is found in the cytoplasm. Functionally, one of the essential components for the initiation of protein synthesis. Protects formylmethionyl-tRNA from spontaneous hydrolysis and promotes its binding to the 30S ribosomal subunits. Also involved in the hydrolysis of GTP during the formation of the 70S ribosomal complex. This is Translation initiation factor IF-2 from Vibrio vulnificus (strain CMCP6).